The primary structure comprises 253 residues: MAATQLTASPVTMSARSLASLDGLRASSVKFSSLKPGTLRQSQFRRLVVKAASVVAPKYTSIKPLGDRVLVKIKEAEEKTLGGILLPSTAQSKPQGGEVVAVGEGRTIGKNKIDITVPTGAQIIYSKYAGTEVEFNDVKHLILKEDDIVGILETEDIKDLKPLNDRVFIKVAEAEEKTAGGLLLTETTKEKPSIGTVIAVGPGSLDEEGKITPLPVSTGSTVLYSKYAGNDFKGKDGSNYIALRASDVMAILS.

Residues 1-50 (MAATQLTASPVTMSARSLASLDGLRASSVKFSSLKPGTLRQSQFRRLVVK) constitute a chloroplast transit peptide. Cpn-10 domain stretches follow at residues 60–153 (TSIK…GILE) and 159–252 (DLKP…MAIL). Position 212 is a phosphothreonine (threonine 212).

Belongs to the GroES chaperonin family. In terms of assembly, homotetramer. Forms stable complexes with CPN60 in the presence of ATP. Interacts with FSD1. Interacts with CLPT1 and CLPT2. Interacts with CHLH. Interacts with SPY. As to expression, ubiquitous. Most abundant in leaves and inflorescence. Low levels found in roots.

It is found in the plastid. Its subcellular location is the chloroplast. Seems to function only as a co-chaperone, along with CPN60, and in certain cases is essential for the discharge of biologically active proteins from CPN60. Required to activate the iron superoxide dismutases (FeSOD). In terms of biological role, involved in abscisic acid (ABA) signaling, independently of its co-chaperone role. Acts as a negative regulator of the CHLH-WRKY40 coupled ABA signaling pathway, downstream of CHLH and upstream of WRKY40. In Arabidopsis thaliana (Mouse-ear cress), this protein is 20 kDa chaperonin, chloroplastic (CPN20).